A 416-amino-acid polypeptide reads, in one-letter code: MLLILLSVALLALSSAQNLNEDVSQEESPSLIAGNPQGAPPQGGNKPQGPPSPPGKPQGPPPQGGNQPQGPPPPPGKPQGPPPQGGNKPQGPPPPGKPQGPPPQGDKSRSPRSPPGKPQGPPPQGGNQPQGPPPPPGKPQGPPPQGGNKPQGPPPPGKPQGPPPQGDNKSRSSRSPPGKPQGPPPQGGNQPQGPPPPPGKPQGPPPQGGNKPQGPPPPGKPQGPPPQGDNKSQSARSPPGKPQGPPPQGGNQPQGPPPPPGKPQGPPPQGGNKPQGPPPPGKPQGPPPQGGSKSRSSRSPPGKPQGPPPQGGNQPQGPPPPPGKPQGPPPQGGNKPQGPPPPGKPQGPPPQGGSKSRSARSPPGKPQGPPQQEGNNPQGPPPPAGGNPQQPQAPPAGQPQGPPRPPQGGRPSRPPQ.

The N-terminal stretch at 1–16 (MLLILLSVALLALSSA) is a signal peptide. Residue Q17 is modified to Pyrrolidone carboxylic acid. Residues 19-28 (LNEDVSQEES) are compositionally biased toward polar residues. The tract at residues 19 to 416 (LNEDVSQEES…QGGRPSRPPQ (398 aa)) is disordered. Phosphoserine is present on S24. The span at 34 to 47 (GNPQGAPPQGGNKP) shows a compositional bias: low complexity. 2 stretches are compositionally biased toward pro residues: residues 48–104 (QGPP…PPPQ) and 112–165 (RSPP…PPPQ). S52 carries the post-translational modification Phosphoserine. 15 repeat units span residues 53 to 72 (PPGK…QGPP), 74 to 93 (PPGK…QGPP), 94 to 113 (PPGK…SPRS), 114 to 133 (PPGK…QGPP), 135 to 154 (PPGK…QGPP), 155 to 174 (PPGK…RSSR), 176 to 195 (PPGK…QGPP), 197 to 216 (PPGK…QGPP), 217 to 236 (PPGK…QSAR), 238 to 257 (PPGK…QGPP), 259 to 278 (PPGK…QGPP), 279 to 298 (PPGK…RSSR), 300 to 319 (PPGK…QGPP), 321 to 340 (PPGK…QGPP), and 341 to 360 (PPGK…RSAR). Positions 53–360 (PPGKPQGPPP…QGGSKSRSAR (308 aa)) are 15 X 20 AA approximate tandem repeats of P-P-G-K-P-Q-G-P-P-P-Q-G-[GD]-[NKS]-[KSQ]-[PRS]-[QRS] [GPS]-[PSAR]-[PSR]. The N-linked (GlcNAc...) asparagine glycan is linked to N168. Over residues 177–227 (PGKPQGPPPQGGNQPQGPPPPPGKPQGPPPQGGNKPQGPPPPGKPQGPPPQ) the composition is skewed to pro residues. Residue N230 is glycosylated (N-linked (GlcNAc...) asparagine). O-linked (Hex) serine glycosylation occurs at S232. Residues 239 to 289 (PGKPQGPPPQGGNQPQGPPPPPGKPQGPPPQGGNKPQGPPPPGKPQGPPPQ) show a composition bias toward pro residues. N272 is a glycosylation site (N-linked (GlcNAc...) asparagine). Low complexity predominate over residues 290-300 (GGSKSRSSRSP). 2 stretches are compositionally biased toward pro residues: residues 301-351 (PGKP…PPPQ) and 378-416 (QGPP…RPPQ).

Post-translationally, N- and O-glycosylated. In head and neck cancer patients, O-glycosylated with glucosylgalactosyl carbohydrate moiety. This modification would require prior hydroxylation on the lysine residue. Proteolytically cleaved at the tripeptide Xaa-Pro-Gln, where Xaa in the P(3) position is mostly lysine. The endoprotease may be of microbial origin. In terms of processing, pyroglutamate formation occurs on terminal Gln residues of cleaved peptides. Pyroglutamate formation found on at least Gln-398 and Gln-400.

It is found in the secreted. In Homo sapiens (Human), this protein is Basic salivary proline-rich protein 2 (PRB2).